The chain runs to 461 residues: Peptidyl-prolyl cis-trans isomerase-like 4 (461 aa).

One can recognise a PPIase cyclophilin-type domain in the interval 1–171 (MSVLLETSLG…KDIRIRHTVI (171 aa)). One can recognise an RRM domain in the interval 248 to 326 (NVLFVCKLNP…HRIHVDFSQS (79 aa)). A disordered region spans residues 372–461 (NYNMVFDKND…DDRYRDRRRR (90 aa)). 2 stretches are compositionally biased toward basic and acidic residues: residues 378–392 (DKNDNRRSAPRERSY) and 400–461 (NYRD…RRRR).

It belongs to the cyclophilin-type PPIase family. PPIL4 subfamily.

It is found in the nucleus. The catalysed reaction is [protein]-peptidylproline (omega=180) = [protein]-peptidylproline (omega=0). PPIases accelerate the folding of proteins. It catalyzes the cis-trans isomerization of proline imidic peptide bonds in oligopeptides. The chain is Peptidyl-prolyl cis-trans isomerase-like 4 (cyp6) from Emericella nidulans (strain FGSC A4 / ATCC 38163 / CBS 112.46 / NRRL 194 / M139) (Aspergillus nidulans).